The chain runs to 103 residues: Large ribosomal subunit protein uL24 (103 aa).

It belongs to the universal ribosomal protein uL24 family. In terms of assembly, part of the 50S ribosomal subunit.

In terms of biological role, one of two assembly initiator proteins, it binds directly to the 5'-end of the 23S rRNA, where it nucleates assembly of the 50S subunit. Functionally, one of the proteins that surrounds the polypeptide exit tunnel on the outside of the subunit. The polypeptide is Large ribosomal subunit protein uL24 (Syntrophomonas wolfei subsp. wolfei (strain DSM 2245B / Goettingen)).